The chain runs to 133 residues: MKIKSIRKAVLLLALLTSTSFAAGKNVNVEFRKGHSSAQYSGEIKGYDYDTYTFYAKKGQKVHVSISNEGADTYLFGPGIDDSVDLSRYSPELDSHGQYSLPASGKYELRVLQTRNDARKNKTKKYNVDIQIK.

The first 22 residues, 1–22 (MKIKSIRKAVLLLALLTSTSFA), serve as a signal peptide directing secretion.

It localises to the periplasm. Its function is as follows. Inhibits activity of g-type lysozyme, which confers increased lysozyme tolerance to the bacterium. This chain is Inhibitor of g-type lysozyme (pliG), found in Escherichia coli (strain K12).